The primary structure comprises 426 residues: Phosphomethylpyrimidine synthase (426 aa).

Substrate is bound by residues Asn66, Met95, Tyr124, His163, 185-187, 226-229, and Glu265; these read SRG and DGLR. Residue His269 coordinates Zn(2+). Tyr292 provides a ligand contact to substrate. Residue His333 coordinates Zn(2+). [4Fe-4S] cluster contacts are provided by Cys407, Cys410, and Cys414.

The protein belongs to the ThiC family. [4Fe-4S] cluster serves as cofactor.

It catalyses the reaction 5-amino-1-(5-phospho-beta-D-ribosyl)imidazole + S-adenosyl-L-methionine = 4-amino-2-methyl-5-(phosphooxymethyl)pyrimidine + CO + 5'-deoxyadenosine + formate + L-methionine + 3 H(+). It functions in the pathway cofactor biosynthesis; thiamine diphosphate biosynthesis. Its function is as follows. Catalyzes the synthesis of the hydroxymethylpyrimidine phosphate (HMP-P) moiety of thiamine from aminoimidazole ribotide (AIR) in a radical S-adenosyl-L-methionine (SAM)-dependent reaction. This is Phosphomethylpyrimidine synthase from Thermococcus gammatolerans (strain DSM 15229 / JCM 11827 / EJ3).